The chain runs to 315 residues: Methionyl-tRNA formyltransferase (315 aa).

113–116 (SLLP) contributes to the (6S)-5,6,7,8-tetrahydrofolate binding site.

It belongs to the Fmt family.

The enzyme catalyses L-methionyl-tRNA(fMet) + (6R)-10-formyltetrahydrofolate = N-formyl-L-methionyl-tRNA(fMet) + (6S)-5,6,7,8-tetrahydrofolate + H(+). Functionally, attaches a formyl group to the free amino group of methionyl-tRNA(fMet). The formyl group appears to play a dual role in the initiator identity of N-formylmethionyl-tRNA by promoting its recognition by IF2 and preventing the misappropriation of this tRNA by the elongation apparatus. The protein is Methionyl-tRNA formyltransferase of Enterobacter sp. (strain 638).